The primary structure comprises 95 residues: Small ribosomal subunit protein bS6 (95 aa).

This sequence belongs to the bacterial ribosomal protein bS6 family.

Binds together with bS18 to 16S ribosomal RNA. This chain is Small ribosomal subunit protein bS6, found in Bacillus velezensis (strain DSM 23117 / BGSC 10A6 / LMG 26770 / FZB42) (Bacillus amyloliquefaciens subsp. plantarum).